Reading from the N-terminus, the 159-residue chain is Phosphopantetheine adenylyltransferase (159 aa).

Thr9 is a substrate binding site. ATP-binding positions include 9-10 and His17; that span reads TF. Residues Lys41, Leu73, and Arg87 each contribute to the substrate site. ATP-binding positions include 88–90, Glu98, and 123–129; these read GLR and YMFISAT.

The protein belongs to the bacterial CoaD family. As to quaternary structure, homohexamer. The cofactor is Mg(2+).

The protein localises to the cytoplasm. The catalysed reaction is (R)-4'-phosphopantetheine + ATP + H(+) = 3'-dephospho-CoA + diphosphate. It participates in cofactor biosynthesis; coenzyme A biosynthesis; CoA from (R)-pantothenate: step 4/5. Reversibly transfers an adenylyl group from ATP to 4'-phosphopantetheine, yielding dephospho-CoA (dPCoA) and pyrophosphate. This Nitrosomonas europaea (strain ATCC 19718 / CIP 103999 / KCTC 2705 / NBRC 14298) protein is Phosphopantetheine adenylyltransferase.